A 196-amino-acid chain; its full sequence is Phosphoheptose isomerase (196 aa).

An SIS domain is found at 36–196 (MTNCLINGGK…GIDALLLGVE (161 aa)). Residue 51-53 (NGG) coordinates substrate. Zn(2+) contacts are provided by His-60 and Glu-64. Residues Glu-64, 93–94 (ND), 119–121 (STS), Ser-124, and Gln-174 each bind substrate. Residues Gln-174 and His-182 each coordinate Zn(2+).

It belongs to the SIS family. GmhA subfamily. As to quaternary structure, homotetramer. Zn(2+) serves as cofactor.

The protein localises to the cytoplasm. The enzyme catalyses 2 D-sedoheptulose 7-phosphate = D-glycero-alpha-D-manno-heptose 7-phosphate + D-glycero-beta-D-manno-heptose 7-phosphate. Its pathway is carbohydrate biosynthesis; D-glycero-D-manno-heptose 7-phosphate biosynthesis; D-glycero-alpha-D-manno-heptose 7-phosphate and D-glycero-beta-D-manno-heptose 7-phosphate from sedoheptulose 7-phosphate: step 1/1. Its function is as follows. Catalyzes the isomerization of sedoheptulose 7-phosphate in D-glycero-D-manno-heptose 7-phosphate. The sequence is that of Phosphoheptose isomerase from Dechloromonas aromatica (strain RCB).